A 229-amino-acid polypeptide reads, in one-letter code: DNA mismatch repair protein MutH (229 aa).

It belongs to the MutH family.

The protein resides in the cytoplasm. Its function is as follows. Sequence-specific endonuclease that cleaves unmethylated GATC sequences. It is involved in DNA mismatch repair. The sequence is that of DNA mismatch repair protein MutH from Escherichia coli O17:K52:H18 (strain UMN026 / ExPEC).